Reading from the N-terminus, the 574-residue chain is uncharacterized protein (574 aa).

This is an uncharacterized protein from Homo sapiens (Human).